The following is a 267-amino-acid chain: Endonuclease NucS (267 aa).

It belongs to the NucS endonuclease family.

Its subcellular location is the cytoplasm. Its function is as follows. Cleaves both 3' and 5' ssDNA extremities of branched DNA structures. This is Endonuclease NucS from Pyrococcus furiosus (strain ATCC 43587 / DSM 3638 / JCM 8422 / Vc1).